Consider the following 349-residue polypeptide: Twinfilin-2 (349 aa).

Position 2 is an N-acetylalanine (Ala2). ADF-H domains follow at residues 4–139 (QTGI…KHLS) and 177–313 (GLAF…DEVH). Lys14 is subject to N6-acetyllysine. Tyr309 carries the post-translational modification Phosphotyrosine. The tract at residues 322–349 (AFAKPKGPGGKRGHKRLIRGPGENGEDS) is disordered. The segment covering 330 to 339 (GGKRGHKRLI) has biased composition (basic residues). At Ser349 the chain carries Phosphoserine.

The protein belongs to the actin-binding proteins ADF family. Twinfilin subfamily. As to quaternary structure, interacts with G-actin; ADP-actin form and capping protein (CP). Isoform 2 interacts (via its N-terminal ADF-H domain) with G-actin (ADP-bound form) with significantly higher affinity than isoform 1. May also be able to interact with TWF1 and phosphoinositides, PI(4,5)P2. When bound to PI(4,5)P2, it is down-regulated. Interacts with MYO7A. In terms of processing, phosphorylated on both serine/threonine and tyrosine. In terms of tissue distribution, isoform 1 is ubiquitously expressed (at protein level). Isoform 2 expression is restricted to heart and skeletal muscle where it is the predominant form.

The protein localises to the cytoplasm. It localises to the cytoskeleton. Its subcellular location is the perinuclear region. The protein resides in the cell projection. It is found in the stereocilium. Its function is as follows. Actin-binding protein involved in motile and morphological processes. Inhibits actin polymerization, likely by sequestering G-actin. By capping the barbed ends of filaments, it also regulates motility. Seems to play an important role in clathrin-mediated endocytosis and distribution of endocytic organelles. May play a role in regulating the mature length of the middle and short rows of stereocilia. The polypeptide is Twinfilin-2 (Twf2) (Mus musculus (Mouse)).